A 226-amino-acid chain; its full sequence is Protein YAE1 homolog (226 aa).

Positions Gly-45–Ala-85 are deca-GX3 motif; required for interaction with LTO1.

Forms a complex with LTO1.

The protein resides in the cytoplasm. Its subcellular location is the nucleus. In terms of biological role, the complex LTO1:YAE1 functions as a target specific adapter that probably recruits apo-ABCE1 to the cytosolic iron-sulfur protein assembly (CIA) complex machinery. May be required for biogenesis of the large ribosomal subunit and initiation of translation. The sequence is that of Protein YAE1 homolog from Homo sapiens (Human).